We begin with the raw amino-acid sequence, 155 residues long: Xanthine-guanine phosphoribosyltransferase (155 aa).

5-phospho-alpha-D-ribose 1-diphosphate is bound by residues 37 to 38 and 91 to 99; these read RG and DDLVDTGNT. Asp92 contacts Mg(2+). Positions 95 and 138 each coordinate guanine. Xanthine is bound by residues Asp95 and Ile138. Residues 95–99 and 137–138 contribute to the GMP site; these read DTGNT and WI.

It belongs to the purine/pyrimidine phosphoribosyltransferase family. XGPT subfamily. In terms of assembly, homotetramer. Requires Mg(2+) as cofactor.

The protein localises to the cell inner membrane. It carries out the reaction GMP + diphosphate = guanine + 5-phospho-alpha-D-ribose 1-diphosphate. The catalysed reaction is XMP + diphosphate = xanthine + 5-phospho-alpha-D-ribose 1-diphosphate. It catalyses the reaction IMP + diphosphate = hypoxanthine + 5-phospho-alpha-D-ribose 1-diphosphate. It functions in the pathway purine metabolism; GMP biosynthesis via salvage pathway; GMP from guanine: step 1/1. It participates in purine metabolism; XMP biosynthesis via salvage pathway; XMP from xanthine: step 1/1. In terms of biological role, acts on guanine, xanthine and to a lesser extent hypoxanthine. Purine salvage pathway enzyme that catalyzes the transfer of the ribosyl-5-phosphate group from 5-phospho-alpha-D-ribose 1-diphosphate (PRPP) to the N9 position of the 6-oxopurines guanine and xanthine to form the corresponding ribonucleotides GMP (guanosine 5'-monophosphate) and XMP (xanthosine 5'-monophosphate), with the release of PPi. To a lesser extent, also acts on hypoxanthine. This chain is Xanthine-guanine phosphoribosyltransferase, found in Haemophilus influenzae (strain ATCC 51907 / DSM 11121 / KW20 / Rd).